We begin with the raw amino-acid sequence, 223 residues long: Germin-like protein subfamily 1 member 10 (223 aa).

The first 24 residues, 1-24 (MAMKSLSFLAALSLLALTLPLTIA), serve as a signal peptide directing secretion. Cys-34 and Cys-51 are oxidised to a cystine. Asn-38 carries N-linked (GlcNAc...) asparagine glycosylation. Positions 65–215 (PGLQTARPIT…AFQVDPRVVM (151 aa)) constitute a Cupin type-1 domain. Residues His-113, His-115, Glu-120, and His-161 each contribute to the Mn(2+) site.

This sequence belongs to the germin family. In terms of assembly, oligomer (believed to be a pentamer but probably hexamer).

Its subcellular location is the secreted. The protein resides in the extracellular space. It localises to the apoplast. May play a role in plant defense. Probably has no oxalate oxidase activity even if the active site is conserved. This chain is Germin-like protein subfamily 1 member 10, found in Arabidopsis thaliana (Mouse-ear cress).